The chain runs to 226 residues: UPF0758 protein SGO_1229 (226 aa).

Residues 103-225 (RILSSQKLAK…YYSYREETDL (123 aa)) form the MPN domain. 3 residues coordinate Zn(2+): histidine 174, histidine 176, and aspartate 187. The JAMM motif signature appears at 174-187 (HNHPSGATRPSRDD).

This sequence belongs to the UPF0758 family.

This Streptococcus gordonii (strain Challis / ATCC 35105 / BCRC 15272 / CH1 / DL1 / V288) protein is UPF0758 protein SGO_1229.